The following is a 374-amino-acid chain: Chaperone protein DnaJ (374 aa).

The 66-residue stretch at 5–70 (CYYEILNVSK…GKRSRYDQFG (66 aa)) folds into the J domain. The CR-type zinc finger occupies 130 to 207 (GVEKEINIPR…CYGSGKIKKQ (78 aa)). Zn(2+) contacts are provided by Cys-143, Cys-146, Cys-159, Cys-162, Cys-181, Cys-184, Cys-195, and Cys-198. 4 CXXCXGXG motif repeats span residues 143 to 150 (CDSCDGTG), 159 to 166 (CHACHGQG), 181 to 188 (CPVCNGTG), and 195 to 202 (CDDCYGSG).

Belongs to the DnaJ family. In terms of assembly, homodimer. Requires Zn(2+) as cofactor.

The protein resides in the cytoplasm. In terms of biological role, participates actively in the response to hyperosmotic and heat shock by preventing the aggregation of stress-denatured proteins and by disaggregating proteins, also in an autonomous, DnaK-independent fashion. Unfolded proteins bind initially to DnaJ; upon interaction with the DnaJ-bound protein, DnaK hydrolyzes its bound ATP, resulting in the formation of a stable complex. GrpE releases ADP from DnaK; ATP binding to DnaK triggers the release of the substrate protein, thus completing the reaction cycle. Several rounds of ATP-dependent interactions between DnaJ, DnaK and GrpE are required for fully efficient folding. Also involved, together with DnaK and GrpE, in the DNA replication of plasmids through activation of initiation proteins. This chain is Chaperone protein DnaJ, found in Francisella philomiragia subsp. philomiragia (strain ATCC 25017 / CCUG 19701 / FSC 153 / O#319-036).